Here is a 236-residue protein sequence, read N- to C-terminus: Adenosine 5'-phosphosulfate reductase 2 (236 aa).

[4Fe-4S] cluster is bound by residues cysteine 122, cysteine 123, cysteine 205, and cysteine 208. The disordered stretch occupies residues 216–236 (NDERAGRWAGREKTECGLHQE). Cysteine 231 (nucleophile; cysteine thiosulfonate intermediate) is an active-site residue.

The protein belongs to the PAPS reductase family. CysH subfamily. [4Fe-4S] cluster is required as a cofactor.

It localises to the cytoplasm. It carries out the reaction [thioredoxin]-disulfide + sulfite + AMP + 2 H(+) = adenosine 5'-phosphosulfate + [thioredoxin]-dithiol. The protein operates within sulfur metabolism; hydrogen sulfide biosynthesis; sulfite from sulfate. Catalyzes the formation of sulfite from adenosine 5'-phosphosulfate (APS) using thioredoxin as an electron donor. The sequence is that of Adenosine 5'-phosphosulfate reductase 2 from Bacillus subtilis (strain 168).